The chain runs to 128 residues: Azurin (128 aa).

Residues 1 to 128 (ACDVSIEGND…IMKGTIELGS (128 aa)) enclose the Plastocyanin-like domain. Cys-2 and Cys-25 form a disulfide bridge. Positions 45, 111, 116, and 120 each coordinate Cu cation.

As to quaternary structure, monomer. Interacts with the AAUA/AAUB heterotetramer complex. It depends on Cu cation as a cofactor.

The protein localises to the periplasm. Functionally, transfers electrons from cytochrome c551 to cytochrome oxidase. Transfers electrons from the tryptophan tryptophylquinone of the aromatic amine dehydrogenase heterotetramer. The protein is Azurin of Alcaligenes faecalis.